Reading from the N-terminus, the 151-residue chain is Large-conductance mechanosensitive channel (151 aa).

Transmembrane regions (helical) follow at residues 12-32 and 71-91; these read GNIV…ALVT and VLLS…FLVV. The segment at 122 to 151 is disordered; it reads AQTNGDSPGRHGGRGTPSPTDGPRASTESQ.

Belongs to the MscL family. As to quaternary structure, homopentamer.

Its subcellular location is the cell membrane. Functionally, channel that opens in response to stretch forces in the membrane lipid bilayer. May participate in the regulation of osmotic pressure changes within the cell. In Mycobacterium tuberculosis (strain CDC 1551 / Oshkosh), this protein is Large-conductance mechanosensitive channel.